The primary structure comprises 350 residues: UDP-N-acetylenolpyruvoylglucosamine reductase (350 aa).

Positions His-24 to Leu-195 constitute an FAD-binding PCMH-type domain. Arg-172 is a catalytic residue. Catalysis depends on Ser-245, which acts as the Proton donor. Glu-342 is a catalytic residue.

It belongs to the MurB family. Requires FAD as cofactor.

Its subcellular location is the cytoplasm. The catalysed reaction is UDP-N-acetyl-alpha-D-muramate + NADP(+) = UDP-N-acetyl-3-O-(1-carboxyvinyl)-alpha-D-glucosamine + NADPH + H(+). It functions in the pathway cell wall biogenesis; peptidoglycan biosynthesis. Cell wall formation. This chain is UDP-N-acetylenolpyruvoylglucosamine reductase, found in Xanthomonas oryzae pv. oryzae (strain MAFF 311018).